We begin with the raw amino-acid sequence, 411 residues long: 2,3-bisphosphoglycerate-independent phosphoglycerate mutase (411 aa).

A disordered region spans residues 164–190; that stretch reads VSSNDPKKEGVQPLTIRPGSDDPADAK.

This sequence belongs to the BPG-independent phosphoglycerate mutase family. A-PGAM subfamily.

The catalysed reaction is (2R)-2-phosphoglycerate = (2R)-3-phosphoglycerate. It participates in carbohydrate degradation; glycolysis; pyruvate from D-glyceraldehyde 3-phosphate: step 3/5. Its function is as follows. Catalyzes the interconversion of 2-phosphoglycerate and 3-phosphoglycerate. This chain is 2,3-bisphosphoglycerate-independent phosphoglycerate mutase, found in Methanoculleus marisnigri (strain ATCC 35101 / DSM 1498 / JR1).